Reading from the N-terminus, the 446-residue chain is Tubulin beta chain (446 aa).

GTP-binding residues include Gln11, Glu69, Ser138, Gly142, Thr143, Gly144, Asn204, and Asn226. Residue Glu69 coordinates Mg(2+). Residues 423–446 (QQYQDAGVDEEEEEYEEEPLPEDE) are disordered. The segment covering 429–446 (GVDEEEEEYEEEPLPEDE) has biased composition (acidic residues).

It belongs to the tubulin family. As to quaternary structure, dimer of alpha and beta chains. A typical microtubule is a hollow water-filled tube with an outer diameter of 25 nm and an inner diameter of 15 nM. Alpha-beta heterodimers associate head-to-tail to form protofilaments running lengthwise along the microtubule wall with the beta-tubulin subunit facing the microtubule plus end conferring a structural polarity. Microtubules usually have 13 protofilaments but different protofilament numbers can be found in some organisms and specialized cells. Requires Mg(2+) as cofactor.

The protein resides in the cytoplasm. Its subcellular location is the cytoskeleton. Its function is as follows. Tubulin is the major constituent of microtubules, a cylinder consisting of laterally associated linear protofilaments composed of alpha- and beta-tubulin heterodimers. Microtubules grow by the addition of GTP-tubulin dimers to the microtubule end, where a stabilizing cap forms. Below the cap, tubulin dimers are in GDP-bound state, owing to GTPase activity of alpha-tubulin. This is Tubulin beta chain (TUBB) from Pestalotiopsis microspora.